The primary structure comprises 1349 residues: Nitric oxide synthase (1349 aa).

The segment at 23-195 (AQQQQQQQQQ…QPRKMSQDYR (173 aa)) is disordered. 2 stretches are compositionally biased toward low complexity: residues 24 to 51 (QQQQ…TQQQ) and 64 to 73 (LNGNGLLSGN). Over residues 142–159 (SGSGSGSGGGGVGVGQGA) the composition is skewed to gly residues. A compositionally biased stretch (polar residues) spans 165-189 (GSCTASGKSSRELSPSPKNQQQPRK). Ser-250 contributes to the (6R)-L-erythro-5,6,7,8-tetrahydrobiopterin binding site. Cys-328 contributes to the heme b binding site. Residues Gln-391, Trp-500, Tyr-501, Glu-505, and Asn-510 each coordinate L-arginine. (6R)-L-erythro-5,6,7,8-tetrahydrobiopterin is bound by residues Trp-591 and Phe-604. Residue Tyr-619 coordinates heme b. The calmodulin-binding stretch occupies residues 641 to 661 (PRRKFNFKQIARAVKFTSKLF). One can recognise a Flavodoxin-like domain in the interval 671–868 (ATVLYATETG…SFRKWAPEVF (198 aa)). An FMN-binding site is contributed by 814 to 845 (VFALGSSAYPNFCAFGQYVDNILGELGGERLL). Residues 928–1167 (AKAKPHNLTR…VRSALGFHLP (240 aa)) form the FAD-binding FR-type domain. FAD is bound by residues 957–968 (YEPGDHVGIFPA) and 1100–1110 (LQPRFYSISSS). Residues 1175 to 1193 (ILIG…WQEF) and 1273 to 1287 (GHIY…AEHV) each bind NADP(+).

Belongs to the NOS family. Heme b is required as a cofactor. The cofactor is FAD. It depends on FMN as a cofactor.

The catalysed reaction is 2 L-arginine + 3 NADPH + 4 O2 + H(+) = 2 L-citrulline + 2 nitric oxide + 3 NADP(+) + 4 H2O. Its activity is regulated as follows. Stimulated by calcium/calmodulin. Functionally, catalyzes the conversion of L-arginine to L-citrulline producing nitric oxide (NO) which is a messenger molecule with diverse functions throughout the body. Truncated isoforms (isoform 3-isoform 6) are able to form intracellular complexes with the full-length protein and serve as dominant negative inhibitors of the enzyme activity. This chain is Nitric oxide synthase (Nos), found in Drosophila melanogaster (Fruit fly).